Reading from the N-terminus, the 209-residue chain is Ribonuclease HII (209 aa).

In terms of domain architecture, RNase H type-2 spans 18–209; it reads GLVAGVDEVG…FKPVKALLER (192 aa). Positions 24, 25, and 116 each coordinate a divalent metal cation.

It belongs to the RNase HII family. The cofactor is Mn(2+). Requires Mg(2+) as cofactor.

The protein localises to the cytoplasm. It catalyses the reaction Endonucleolytic cleavage to 5'-phosphomonoester.. In terms of biological role, endonuclease that specifically degrades the RNA of RNA-DNA hybrids. This is Ribonuclease HII from Shewanella sp. (strain ANA-3).